Reading from the N-terminus, the 249-residue chain is Aliphatic sulfonates import ATP-binding protein SsuB 2 (249 aa).

Positions Val-15–Phe-231 constitute an ABC transporter domain. Gly-47–Ser-54 contacts ATP.

This sequence belongs to the ABC transporter superfamily. Aliphatic sulfonates importer (TC 3.A.1.17.2) family. In terms of assembly, the complex is composed of two ATP-binding proteins (SsuB), two transmembrane proteins (SsuC) and a solute-binding protein (SsuA).

Its subcellular location is the cell inner membrane. The catalysed reaction is ATP + H2O + aliphatic sulfonate-[sulfonate-binding protein]Side 1 = ADP + phosphate + aliphatic sulfonateSide 2 + [sulfonate-binding protein]Side 1.. Part of the ABC transporter complex SsuABC involved in aliphatic sulfonates import. Responsible for energy coupling to the transport system. The sequence is that of Aliphatic sulfonates import ATP-binding protein SsuB 2 from Rhizobium johnstonii (strain DSM 114642 / LMG 32736 / 3841) (Rhizobium leguminosarum bv. viciae).